The sequence spans 380 residues: Alanine racemase (380 aa).

K39 functions as the Proton acceptor; specific for D-alanine in the catalytic mechanism. K39 bears the N6-(pyridoxal phosphate)lysine mark. Residue R137 participates in substrate binding. Residue Y263 is the Proton acceptor; specific for L-alanine of the active site. Substrate is bound at residue M310.

Belongs to the alanine racemase family. Pyridoxal 5'-phosphate is required as a cofactor.

It carries out the reaction L-alanine = D-alanine. Its pathway is amino-acid biosynthesis; D-alanine biosynthesis; D-alanine from L-alanine: step 1/1. Functionally, catalyzes the interconversion of L-alanine and D-alanine. May also act on other amino acids. The protein is Alanine racemase (alr) of Macrococcus caseolyticus (strain JCSC5402) (Macrococcoides caseolyticum).